Here is a 418-residue protein sequence, read N- to C-terminus: Alpha-1-antitrypsin (418 aa).

Residues Met-1 to Ala-24 form the signal peptide. The residue at position 38 (Ser-38) is a Phosphoserine. Asn-70, Asn-107, and Asn-271 each carry an N-linked (GlcNAc...) asparagine glycan. Positions Gly-373 to Lys-392 are RCL. Ser-383 carries the post-translational modification Phosphoserine.

Belongs to the serpin family. In terms of assembly, interacts with CELA2A. Interacts with ERGIC3 and LMAN1/ERGIC53. Interacts with PRSS1/Trypsin. In terms of tissue distribution, plasma.

The protein resides in the secreted. In terms of biological role, inhibitor of serine proteases. Its primary target is elastase, but it also has a moderate affinity for plasmin and thrombin. Inhibits trypsin, chymotrypsin and plasminogen activator. This Pongo abelii (Sumatran orangutan) protein is Alpha-1-antitrypsin (SERPINA1).